Here is a 454-residue protein sequence, read N- to C-terminus: Bifunctional protein GlmU (454 aa).

A pyrophosphorylase region spans residues 1-228 (MSPLHVVILA…PFEVQGVNNR (228 aa)). UDP-N-acetyl-alpha-D-glucosamine contacts are provided by residues 9–12 (LAAG), K23, Q74, 79–80 (GT), 101–103 (YGD), G138, E153, N168, and N226. D103 serves as a coordination point for Mg(2+). A Mg(2+)-binding site is contributed by N226. The segment at 229 to 249 (LQLAELERWYQRQQAERLMTE) is linker. The interval 250–454 (GASLADPARI…IAGWERPKKA (205 aa)) is N-acetyltransferase. Residues R332 and K350 each coordinate UDP-N-acetyl-alpha-D-glucosamine. The active-site Proton acceptor is H362. UDP-N-acetyl-alpha-D-glucosamine-binding residues include Y365 and N376. Residues A379, 385-386 (NY), S404, A422, and R439 contribute to the acetyl-CoA site.

This sequence in the N-terminal section; belongs to the N-acetylglucosamine-1-phosphate uridyltransferase family. The protein in the C-terminal section; belongs to the transferase hexapeptide repeat family. Homotrimer. It depends on Mg(2+) as a cofactor.

Its subcellular location is the cytoplasm. The enzyme catalyses alpha-D-glucosamine 1-phosphate + acetyl-CoA = N-acetyl-alpha-D-glucosamine 1-phosphate + CoA + H(+). It carries out the reaction N-acetyl-alpha-D-glucosamine 1-phosphate + UTP + H(+) = UDP-N-acetyl-alpha-D-glucosamine + diphosphate. It functions in the pathway nucleotide-sugar biosynthesis; UDP-N-acetyl-alpha-D-glucosamine biosynthesis; N-acetyl-alpha-D-glucosamine 1-phosphate from alpha-D-glucosamine 6-phosphate (route II): step 2/2. The protein operates within nucleotide-sugar biosynthesis; UDP-N-acetyl-alpha-D-glucosamine biosynthesis; UDP-N-acetyl-alpha-D-glucosamine from N-acetyl-alpha-D-glucosamine 1-phosphate: step 1/1. Its pathway is bacterial outer membrane biogenesis; LPS lipid A biosynthesis. Catalyzes the last two sequential reactions in the de novo biosynthetic pathway for UDP-N-acetylglucosamine (UDP-GlcNAc). The C-terminal domain catalyzes the transfer of acetyl group from acetyl coenzyme A to glucosamine-1-phosphate (GlcN-1-P) to produce N-acetylglucosamine-1-phosphate (GlcNAc-1-P), which is converted into UDP-GlcNAc by the transfer of uridine 5-monophosphate (from uridine 5-triphosphate), a reaction catalyzed by the N-terminal domain. This chain is Bifunctional protein GlmU, found in Marinobacter nauticus (strain ATCC 700491 / DSM 11845 / VT8) (Marinobacter aquaeolei).